A 330-amino-acid chain; its full sequence is Fructose-1,6-bisphosphatase class 1 (330 aa).

Mg(2+)-binding residues include Glu-78, Asp-97, Leu-99, and Asp-100. Residues Asp-100–Ser-103 and Asn-188 each bind substrate. Residue Glu-260 coordinates Mg(2+).

It belongs to the FBPase class 1 family. Homotetramer. It depends on Mg(2+) as a cofactor.

Its subcellular location is the cytoplasm. The enzyme catalyses beta-D-fructose 1,6-bisphosphate + H2O = beta-D-fructose 6-phosphate + phosphate. It functions in the pathway carbohydrate biosynthesis; gluconeogenesis. This is Fructose-1,6-bisphosphatase class 1 from Paracoccus denitrificans (strain Pd 1222).